Here is a 100-residue protein sequence, read N- to C-terminus: Small ribosomal subunit protein uS14c (100 aa).

The protein belongs to the universal ribosomal protein uS14 family. As to quaternary structure, part of the 30S ribosomal subunit.

It localises to the plastid. It is found in the chloroplast. In terms of biological role, binds 16S rRNA, required for the assembly of 30S particles. The chain is Small ribosomal subunit protein uS14c from Draba nemorosa (Woodland whitlowgrass).